Reading from the N-terminus, the 230-residue chain is Cytidylate kinase (230 aa).

12–20 contacts ATP; that stretch reads GPSGTGKST.

Belongs to the cytidylate kinase family. Type 1 subfamily.

Its subcellular location is the cytoplasm. It catalyses the reaction CMP + ATP = CDP + ADP. The catalysed reaction is dCMP + ATP = dCDP + ADP. This is Cytidylate kinase from Corynebacterium efficiens (strain DSM 44549 / YS-314 / AJ 12310 / JCM 11189 / NBRC 100395).